Here is a 2312-residue protein sequence, read N- to C-terminus: Protein Ycf2 (2312 aa).

Disordered regions lie at residues 170–191 (SSQL…GTED), 223–253 (TEIE…EMNN), and 942–1009 (KRKK…KRKE). Positions 232 to 242 (KGLSGSSSKSR) are enriched in low complexity. Basic and acidic residues-rich tracts occupy residues 243-252 (LFTEGEKEMN) and 950-1007 (KRKE…PEKR). 1439-1446 (GSIGSGRS) contributes to the ATP binding site. Disordered regions lie at residues 1513–1532 (YEDR…YEPG), 1857–1983 (LVGS…LLRP), and 2050–2166 (PAEE…DGFS). The span at 1863–1963 (TEEEVEGTEE…GEGTEDEEVE (101 aa)) shows a compositional bias: acidic residues. Positions 1964–1976 (GTEKDSSQFDNDR) are enriched in basic and acidic residues. Composition is skewed to acidic residues over residues 2050-2067 (PAEE…EALE) and 2074-2149 (GEEE…ENDS).

This sequence belongs to the Ycf2 family.

The protein resides in the plastid. The protein localises to the chloroplast stroma. In terms of biological role, probable ATPase of unknown function. Its presence in a non-photosynthetic plant (Epifagus virginiana) and experiments in tobacco indicate that it has an essential function which is probably not related to photosynthesis. This is Protein Ycf2 from Oenothera parviflora (Small-flowered evening primrose).